We begin with the raw amino-acid sequence, 304 residues long: KIN17-like protein (304 aa).

The C2H2-type zinc-finger motif lies at 26–50; that stretch reads WYCSACQKQMRDENGFKCHTQSEGH. 2 disordered regions span residues 204 to 228 and 261 to 291; these read IDLSKKGNPIQLNLSSSSDSHSAQN and LNKSRKKNNKDSLDQGQNVKRPRSAVEDIIA.

The protein belongs to the KIN17 family.

It is found in the nucleus. It localises to the nucleolus. The sequence is that of KIN17-like protein from Schizosaccharomyces pombe (strain 972 / ATCC 24843) (Fission yeast).